The chain runs to 1238 residues: Multifunctional 2-oxoglutarate metabolism enzyme (1238 aa).

Residues 1–41 form a 2-oxoglutarate dehydrogenase E1, N-terminal part region; the sequence is MANISSPFGQNEWLVEEMYRKFRDDPSSVDPSWHEFLVDYN. A linker region spans residues 42 to 97; it reads PESTAEPVLTDPTSTDKQPSATPQAKPAAAADPVASRAKPATTPTVANGTAAGSAA. Residues 44-108 are disordered; the sequence is STAEPVLTDP…PAKTTTTPPI (65 aa). Low complexity predominate over residues 59-107; sequence QPSATPQAKPAAAADPVASRAKPATTPTVANGTAAGSAAAPAKTTTTPP. The tract at residues 98–346 is succinyltransferase E2; it reads APAKTTTTPP…LRTIHEMVLS (249 aa). His325 functions as the Proton acceptor; for succinyltransferase activity in the catalytic mechanism. Positions 347–1238 are 2-oxoglutarate dehydrogenase E1, C-terminal part; sequence DSFWDEIFRE…QQEILDTAFG (892 aa). A thiamine diphosphate-binding site is contributed by Arg551. 2 residues coordinate 2-oxoglutarate: His590 and Ser615. Residues Ser615, Leu617, Asp657, Ala658, Ala659, and Asn690 each contribute to the thiamine diphosphate site. Position 657 (Asp657) interacts with Mg(2+). Mg(2+) contacts are provided by Asn690 and Ile692. Residues 795-825 adopt a coiled-coil conformation; that stretch reads DISLKEAEDALRDYQGQLERVFNEVRDLEKH. Position 1032 (His1032) interacts with 2-oxoglutarate. Acetyl-CoA contacts are provided by Thr1050, Arg1066, Lys1101, Ser1104, Gln1154, Arg1161, and Arg1162.

It belongs to the 2-oxoacid dehydrogenase family. Kgd subfamily. As to quaternary structure, homodimer. The 2-oxoglutarate dehydrogenase (ODH) complex contains multiple copies of three enzymatic components: 2-oxoglutarate dehydrogenase (E1), dihydrolipoamide succinyltransferase (E2) and lipoamide dehydrogenase (E3). It depends on Mg(2+) as a cofactor. Thiamine diphosphate serves as cofactor.

The enzyme catalyses glyoxylate + 2-oxoglutarate + H(+) = 2-hydroxy-3-oxoadipate + CO2. It carries out the reaction 2-oxoglutarate + H(+) = succinate semialdehyde + CO2. It catalyses the reaction N(6)-[(R)-lipoyl]-L-lysyl-[protein] + 2-oxoglutarate + H(+) = N(6)-[(R)-S(8)-succinyldihydrolipoyl]-L-lysyl-[protein] + CO2. The catalysed reaction is N(6)-[(R)-dihydrolipoyl]-L-lysyl-[protein] + succinyl-CoA = N(6)-[(R)-S(8)-succinyldihydrolipoyl]-L-lysyl-[protein] + CoA. The protein operates within carbohydrate metabolism; tricarboxylic acid cycle; succinate from 2-oxoglutarate (transferase route): step 1/2. It participates in carbohydrate metabolism; tricarboxylic acid cycle; succinyl-CoA from 2-oxoglutarate (dehydrogenase route): step 1/1. With respect to regulation, alpha-ketoglutarate dehydrogenase and decarboxylase activities are inhibited by unphosphorylated GarA, and allosterically activated by acetyl-CoA, the main substrate of the TCA cycle. Functionally, shows three enzymatic activities that share a first common step, the attack of thiamine-PP on 2-oxoglutarate (alpha-ketoglutarate, KG), leading to the formation of an enamine-thiamine-PP intermediate upon decarboxylation. Thus, displays KGD activity, catalyzing the decarboxylation from five-carbon 2-oxoglutarate to four-carbon succinate semialdehyde (SSA). Also catalyzes C-C bond formation between the activated aldehyde formed after decarboxylation of alpha-ketoglutarate and the carbonyl of glyoxylate (GLX), to yield 2-hydroxy-3-oxoadipate (HOA), which spontaneously decarboxylates to form 5-hydroxylevulinate (HLA). And is also a component of the 2-oxoglutarate dehydrogenase (ODH) complex, that catalyzes the overall conversion of 2-oxoglutarate to succinyl-CoA and CO(2). The KG decarboxylase and KG dehydrogenase reactions provide two alternative, tightly regulated, pathways connecting the oxidative and reductive branches of the TCA cycle. This Mycobacterium leprae (strain TN) protein is Multifunctional 2-oxoglutarate metabolism enzyme (kgd).